Consider the following 327-residue polypeptide: uncharacterized protein (327 aa).

Residues 1–24 (MKQPGFIRLATLALLSTLSFFSHG) form the signal peptide.

This is an uncharacterized protein from Salmonella typhimurium (strain LT2 / SGSC1412 / ATCC 700720).